A 947-amino-acid chain; its full sequence is Protein translocase subunit SecA 1 (947 aa).

ATP-binding positions include Gln83, 101 to 105 (GEGKT), and Asp490. The disordered stretch occupies residues 860 to 947 (AKAQEQTGQG…KTSKPTRRRG (88 aa)). Basic and acidic residues predominate over residues 925-934 (TRRERREAAR). A compositionally biased stretch (basic residues) spans 935–947 (KQAKTSKPTRRRG).

The protein belongs to the SecA family. As to quaternary structure, monomer and homodimer. Part of the essential Sec protein translocation apparatus which comprises SecA, SecYEG and auxiliary proteins SecDF. Other proteins may also be involved.

It localises to the cell membrane. It is found in the cytoplasm. The catalysed reaction is ATP + H2O + cellular proteinSide 1 = ADP + phosphate + cellular proteinSide 2.. Functionally, part of the Sec protein translocase complex. Interacts with the SecYEG preprotein conducting channel. Has a central role in coupling the hydrolysis of ATP to the transfer of proteins into and across the cell membrane, serving as an ATP-driven molecular motor driving the stepwise translocation of polypeptide chains across the membrane. This Mycobacterium sp. (strain KMS) protein is Protein translocase subunit SecA 1.